The sequence spans 375 residues: MACVKFPWELMEEILYRVPSLSLSRFKTVSKEWNTLLNDKTFIKKHLALVRPQFRLWTNSKVYSVDVSLNDDPNIELRELPLDIPYVIDHRTTNFLPCNDLLFCASWWSNKAVVWNPSLRQTRLIKSGEEHFRFGGIGYDSGRPGKGYHIFGHSHSRLSVNGNTSKFIKRFYITKFESNAWKCIDDVSLGENSIGGDSLDNNNVSLNGNLYWTTNSYDTDEYLIQSFDFSKEIFKIFCVLPRKKDSSDIPVLSVFRGDRLSVLHKFKGTNNMEIWVTKNKINESVKAVVWMMFMTVSIPIYKDSKPSYFINDIYEKRLVMCCSDENGKACVYIVKDQARKKIQLGFHVSEFSHCFYDPSLIPIPSETSGQKISNS.

The region spanning M1–H46 is the F-box domain.

The sequence is that of Putative F-box protein At1g12190 from Arabidopsis thaliana (Mouse-ear cress).